A 428-amino-acid chain; its full sequence is Enolase (428 aa).

Residue Gln-162 coordinates (2R)-2-phosphoglycerate. Residue Glu-204 is the Proton donor of the active site. The Mg(2+) site is built by Asp-241, Glu-282, and Asp-309. Lys-334, Arg-363, Ser-364, and Lys-385 together coordinate (2R)-2-phosphoglycerate. Lys-334 functions as the Proton acceptor in the catalytic mechanism.

It belongs to the enolase family. Requires Mg(2+) as cofactor.

The protein resides in the cytoplasm. Its subcellular location is the secreted. The protein localises to the cell surface. It catalyses the reaction (2R)-2-phosphoglycerate = phosphoenolpyruvate + H2O. Its pathway is carbohydrate degradation; glycolysis; pyruvate from D-glyceraldehyde 3-phosphate: step 4/5. Its function is as follows. Catalyzes the reversible conversion of 2-phosphoglycerate (2-PG) into phosphoenolpyruvate (PEP). It is essential for the degradation of carbohydrates via glycolysis. The sequence is that of Enolase from Mycobacterium marinum (strain ATCC BAA-535 / M).